A 494-amino-acid chain; its full sequence is MPLYSVTVKWGKEKFEGVELNTDEPPMVFKAQLFALTGVQPARQKVMVKGGTLKDDDWGNIKMKNGMTVLMMGSADALPEEPSAKTVFVEDMTEEQLASAMELPCGLTNLGNTCYMNATVQCIRSVPELKDALKRYAGALRASGEMASAQYITAALRDLFDSMDKTSSSIPPIILLQFLHMAFPQFAEKGEQGQYLQQDANECWVQMMRVLQQKLEAIEDDTVKETDSSSASAVTPSKKKSLIDQFFGVEFETTMKCTESEEEEVTKGKESQLQLSCFINQEVKYLFTGLKLRLQEEITKQSPTLQRNALYIKSSKISRLPAYLTIQMVRFFYKEKESVNAKVLKDVKFPLMLDVYELCTPELQEKMVSFRSKFKDLEDKKVNQQPKTGDKDSSPQKEVKYEPFSFADDIGSNNCGYYDLQAVLTHQGRSSSSGHYVSWVKRKQDEWIKFDDDKVSIVTPEDILRLSGGGDWHIAYVLLYGPRRVEIMEEESEQ.

Positions 4–80 (YSVTVKWGKE…MMGSADALPE (77 aa)) constitute a Ubiquitin-like domain. Thr52 is modified (phosphothreonine). In terms of domain architecture, USP spans 105–483 (CGLTNLGNTC…IAYVLLYGPR (379 aa)). Catalysis depends on Cys114, which acts as the Nucleophile. A phosphoserine mark is found at Ser143 and Ser148. At Thr235 the chain carries Phosphothreonine. Ser237, Ser302, and Ser432 each carry phosphoserine. Catalysis depends on His435, which acts as the Proton acceptor. Residue Lys449 is modified to N6-acetyllysine.

It belongs to the peptidase C19 family. USP14/UBP6 subfamily. In terms of assembly, homodimer (Potential). Associates with the 26S proteasome. Interacts with FANCC, CXCR4 and ERN1. Interacts with TRIM14; this interaction recruits USP14 to cleave ubiquitin chains of CGAS.

The protein localises to the cytoplasm. The protein resides in the cell membrane. The enzyme catalyses Thiol-dependent hydrolysis of ester, thioester, amide, peptide and isopeptide bonds formed by the C-terminal Gly of ubiquitin (a 76-residue protein attached to proteins as an intracellular targeting signal).. Proteasome-associated deubiquitinase which releases ubiquitin from the proteasome targeted ubiquitinated proteins. Ensures the regeneration of ubiquitin at the proteasome. Is a reversibly associated subunit of the proteasome and a large fraction of proteasome-free protein exists within the cell. Required for the degradation of the chemokine receptor CXCR4 which is critical for CXCL12-induced cell chemotaxis. Also serves as a physiological inhibitor of endoplasmic reticulum-associated degradation (ERAD) under the non-stressed condition by inhibiting the degradation of unfolded endoplasmic reticulum proteins via interaction with ERN1. Indispensable for synaptic development and function at neuromuscular junctions (NMJs). Plays a role in the innate immune defense against viruses by stabilizing the viral DNA sensor CGAS and thus inhibiting its autophagic degradation. The polypeptide is Ubiquitin carboxyl-terminal hydrolase 14 (USP14) (Bos taurus (Bovine)).